Consider the following 256-residue polypeptide: Sugar fermentation stimulation protein homolog (256 aa).

The protein belongs to the SfsA family.

In Prochlorococcus marinus (strain MIT 9211), this protein is Sugar fermentation stimulation protein homolog.